The primary structure comprises 543 residues: CTP synthase (543 aa).

Positions 1 to 265 (MARYIFITGG…DDEVLAAFAI (265 aa)) are amidoligase domain. S13 contributes to the CTP binding site. Residue S13 coordinates UTP. Residue 14–19 (SLGKGL) participates in ATP binding. An L-glutamine-binding site is contributed by Y54. D71 contacts ATP. Residues D71 and E139 each coordinate Mg(2+). Residues 146–148 (DIE), 186–191 (KTKPTQ), and K222 contribute to the CTP site. Residues 186–191 (KTKPTQ) and K222 contribute to the UTP site. 238–240 (RDA) lines the ATP pocket. The 252-residue stretch at 291–542 (TIAIVGKYTG…VQAALVQSRL (252 aa)) folds into the Glutamine amidotransferase type-1 domain. Position 353 (G353) interacts with L-glutamine. The active-site Nucleophile; for glutamine hydrolysis is the C380. Residues 381 to 384 (FGMQ), E404, and R470 each bind L-glutamine. Active-site residues include H515 and E517.

The protein belongs to the CTP synthase family. As to quaternary structure, homotetramer.

The enzyme catalyses UTP + L-glutamine + ATP + H2O = CTP + L-glutamate + ADP + phosphate + 2 H(+). It carries out the reaction L-glutamine + H2O = L-glutamate + NH4(+). The catalysed reaction is UTP + NH4(+) + ATP = CTP + ADP + phosphate + 2 H(+). Its pathway is pyrimidine metabolism; CTP biosynthesis via de novo pathway; CTP from UDP: step 2/2. Allosterically activated by GTP, when glutamine is the substrate; GTP has no effect on the reaction when ammonia is the substrate. The allosteric effector GTP functions by stabilizing the protein conformation that binds the tetrahedral intermediate(s) formed during glutamine hydrolysis. Inhibited by the product CTP, via allosteric rather than competitive inhibition. Functionally, catalyzes the ATP-dependent amination of UTP to CTP with either L-glutamine or ammonia as the source of nitrogen. Regulates intracellular CTP levels through interactions with the four ribonucleotide triphosphates. The protein is CTP synthase of Rhodopseudomonas palustris (strain ATCC BAA-98 / CGA009).